Here is a 479-residue protein sequence, read N- to C-terminus: F-box/LRR-repeat protein 16 (479 aa).

The disordered stretch occupies residues 1–62; that stretch reads MSSPGIDGDP…PTLPPPSLAA (62 aa). Pro residues predominate over residues 47 to 60; sequence CQPPPPPTLPPPSL. Arginine 92 is modified (omega-N-methylarginine). The F-box domain occupies 94-139; sequence PLATDEKILNGLFWYFSACEKCVLAQVCKAWRRVLYQPKFWAGLTP. 7 LRR repeats span residues 244-266, 267-290, 319-343, 345-369, 371-395, 396-420, and 446-470; these read ITSL…ISQL, LPNL…YFTA, LPNL…LVAE, LRKL…YVAC, LHRL…YLST, MSSL…HLLA, and LQEL…YFSQ.

In terms of assembly, interacts with SKP1 and CUL1.

Substrate-recognition component of the SCF (SKP1-CUL1-F-box protein)-type E3 ubiquitin ligase complex. The protein is F-box/LRR-repeat protein 16 (FBXL16) of Homo sapiens (Human).